Reading from the N-terminus, the 200-residue chain is MGGALIVLAMPKTIQFIKSAVLEKDFPVHKKAEVAIAGRSNAGKSSFINALTKNKIAKVSSTPGKTRLLNFFELDQSYVMVDMPGYGFAARSGDEMREWHRMIETYLMNREQLRGLLLVMDIRRSWTEDEELLKEFSERRGFPLAVVLTKADKMSRSQMLQAVAKVKKASGLSAVFGVSALKKEGQDAVEDYIYENWIKE.

Residues 30–199 (KKAEVAIAGR…EDYIYENWIK (170 aa)) enclose the EngB-type G domain. GTP-binding positions include 38-45 (GRSNAGKS), 64-68 (GKTRL), 82-85 (DMPG), 149-152 (TKAD), and 178-180 (VSA). Positions 45 and 66 each coordinate Mg(2+).

This sequence belongs to the TRAFAC class TrmE-Era-EngA-EngB-Septin-like GTPase superfamily. EngB GTPase family. Mg(2+) serves as cofactor.

Functionally, necessary for normal cell division and for the maintenance of normal septation. The chain is Probable GTP-binding protein EngB from Bdellovibrio bacteriovorus (strain ATCC 15356 / DSM 50701 / NCIMB 9529 / HD100).